Consider the following 181-residue polypeptide: Adenine phosphoribosyltransferase (181 aa).

Belongs to the purine/pyrimidine phosphoribosyltransferase family. As to quaternary structure, homodimer.

The protein resides in the cytoplasm. It carries out the reaction AMP + diphosphate = 5-phospho-alpha-D-ribose 1-diphosphate + adenine. It functions in the pathway purine metabolism; AMP biosynthesis via salvage pathway; AMP from adenine: step 1/1. Its function is as follows. Catalyzes a salvage reaction resulting in the formation of AMP, that is energically less costly than de novo synthesis. This is Adenine phosphoribosyltransferase from Rhodopseudomonas palustris (strain ATCC BAA-98 / CGA009).